The primary structure comprises 515 residues: MKDSSNLLEMRNISKEFPGVKALDNVTLKVKKGSVHALMGENGAGKSTLMKCLFGIYHPNSGEIFISGQKVQFKNSKHALDNGVSMVHQELNQVRERNVMDNLWLGRYPKKGLFIDEKKMYDETEKIFKDLDINVNPRDKVSTLSVSQMQMVEIAKAVSYNSKIIVMDEPTSSLTEKEVSHLFKIINKLRKQGISIIYISHKMEEILEISDEVTIMRDGKWIATEKASDLTMDLIIKLMVGRELTDRFPKKDHIPKETTLEVNNLSDAKNELKNVSFKLRKGEILGIAGLVGAKRTETLETLFGLREKGSGDIILHGKKVDNSKPFKAMQNGFALVTEERRQTGIFGKLPIDFNSIIANIDSYKTSTGLLANERISKDTQWVIDSMKVKTPSQKTLIGSLSGGNQQKIVIGKWLLRKPEILLLDEPTRGIDVGAKFEIYQLINELAKEDKGIIMVSSEMPELLGVCDRILVMSNGRVSGIVNANETTQEEIMHLSAKYLSVTGGVNNANQIKEKV.

ABC transporter domains lie at 8–243 (LEMR…VGRE) and 254–499 (IPKE…AKYL). 40 to 47 (GENGAGKS) provides a ligand contact to ATP.

Belongs to the ABC transporter superfamily. Galactose/methyl galactoside importer (TC 3.A.1.2.3) family. The complex is composed of one ATP-binding protein (MglA), two transmembrane proteins (MglC) and a solute-binding protein (MglB).

The protein localises to the cell membrane. It catalyses the reaction D-galactose(out) + ATP + H2O = D-galactose(in) + ADP + phosphate + H(+). The catalysed reaction is methyl beta-D-galactoside(out) + ATP + H2O = methyl beta-D-galactoside(in) + ADP + phosphate + H(+). Part of the ABC transporter complex MglABC involved in galactose/methyl galactoside import. Responsible for energy coupling to the transport system. In Clostridium perfringens (strain 13 / Type A), this protein is Galactose/methyl galactoside import ATP-binding protein MglA.